A 363-amino-acid chain; its full sequence is Fructose-bisphosphate aldolase C (363 aa).

Residues Arg56 and Lys147 each contribute to the substrate site. Lys230 serves as the catalytic Schiff-base intermediate with dihydroxyacetone-P.

This sequence belongs to the class I fructose-bisphosphate aldolase family. As to quaternary structure, homotetramer. Expressed in brain but not in liver or muscle.

The enzyme catalyses beta-D-fructose 1,6-bisphosphate = D-glyceraldehyde 3-phosphate + dihydroxyacetone phosphate. The protein operates within carbohydrate degradation; glycolysis; D-glyceraldehyde 3-phosphate and glycerone phosphate from D-glucose: step 4/4. In Carassius auratus (Goldfish), this protein is Fructose-bisphosphate aldolase C (aldoc).